Here is a 179-residue protein sequence, read N- to C-terminus: Adenine phosphoribosyltransferase (179 aa).

Belongs to the purine/pyrimidine phosphoribosyltransferase family. Homodimer.

Its subcellular location is the cytoplasm. The enzyme catalyses AMP + diphosphate = 5-phospho-alpha-D-ribose 1-diphosphate + adenine. It participates in purine metabolism; AMP biosynthesis via salvage pathway; AMP from adenine: step 1/1. Catalyzes a salvage reaction resulting in the formation of AMP, that is energically less costly than de novo synthesis. In Azorhizobium caulinodans (strain ATCC 43989 / DSM 5975 / JCM 20966 / LMG 6465 / NBRC 14845 / NCIMB 13405 / ORS 571), this protein is Adenine phosphoribosyltransferase.